The following is a 264-amino-acid chain: Regulatory protein RecX (264 aa).

This sequence belongs to the RecX family.

The protein resides in the cytoplasm. In terms of biological role, modulates RecA activity. The polypeptide is Regulatory protein RecX (Lacticaseibacillus casei (strain BL23) (Lactobacillus casei)).